The chain runs to 312 residues: Isethionate sulfite-lyase activating enzyme (312 aa).

The Radical SAM core domain occupies 20–304 (HDGPGIRTIV…GLQKTALDIL (285 aa)). Positions 34, 38, 41, 60, 66, 69, 73, 93, 96, 100, and 104 each coordinate [4Fe-4S] cluster. 40 to 42 (WCS) contributes to the S-adenosyl-L-methionine binding site. 4Fe-4S ferredoxin-type domains are found at residues 51-83 (AELA…CGDD) and 84-115 (DKPR…YGKK). S-adenosyl-L-methionine contacts are provided by residues Gly144, 193–195 (DIK), and His267.

This sequence belongs to the organic radical-activating enzymes family. In terms of assembly, monomer. Requires [4Fe-4S] cluster as cofactor.

The enzyme catalyses glycyl-[protein] + reduced [flavodoxin] + S-adenosyl-L-methionine = glycin-2-yl radical-[protein] + semiquinone [flavodoxin] + 5'-deoxyadenosine + L-methionine + H(+). Its pathway is organosulfur degradation; alkanesulfonate degradation. In terms of biological role, involved in an anaerobic respiration pathway that converts the sulfonate isethionate (2-hydroxyethanesulfonate) to ammonia, acetate and sulfide. Catalyzes activation of the isethionate sulfite-lyase IslA under anaerobic conditions by generation of an organic free radical on a glycine residue, via a homolytic cleavage of S-adenosyl-L-methionine (SAM). The sequence is that of Isethionate sulfite-lyase activating enzyme from Desulfovibrio desulfuricans (strain ATCC 27774 / DSM 6949 / MB).